The chain runs to 1086 residues: Sterol regulatory element-binding protein cleavage-activating protein (1086 aa).

Residues 1–35 (MRIFTLGKGRISRGYARQVNPSLFAKYSYCIANNP) lie on the Cytoplasmic side of the membrane. The chain crosses the membrane as a helical span at residues 36-56 (WYFILVFTLLSITGIYSSLVA). Topologically, residues 57–229 (YQQSLYDQSL…TVVARIPDLT (173 aa)) are lumenal. N-linked (GlcNAc...) asparagine glycosylation is found at asparagine 94 and asparagine 168. Residues 230–250 (VIYRWYLWVGFGVGLFAYLYL) traverse the membrane as a helical segment. Residues 233-391 (RWYLWVGFGV…GSFFLAVLSV (159 aa)) enclose the SSD domain. Over 251–265 (SLVRLHDIRAKFGLT) the chain is Cytoplasmic. Residues 266 to 286 (ATIFIQSGTAYFSTCSLLYFF) traverse the membrane as a helical segment. Topologically, residues 287–290 (ERTG) are lumenal. Residues 291-311 (PICPWPMAYYIIIFMDIENSF) form a helical membrane-spanning segment. The Cytoplasmic segment spans residues 312 to 337 (RLLRAVIASPQTKRVPSRIMEGFSST). A helical transmembrane segment spans residues 338 to 358 (IIASFSSLLKKLLTLFVLSFF). Residues 359–367 (VYPLVQEFC) lie on the Lumenal side of the membrane. The chain crosses the membrane as a helical span at residues 368–388 (LFLACSFVVSFLLHGSFFLAV). Residues 389-422 (LSVDIRRLELQDFLDSNSSNRNSKWWVPYLEYVR) lie on the Cytoplasmic side of the membrane. Positions 396–401 (LELQDF) match the ER export signal motif. The chain crosses the membrane as a helical span at residues 423-443 (FMWSPWIIDNLGTVSFHMYVI). Residues 444-544 (YLQLQSSTDI…FHDRRVWRWS (101 aa)) are Lumenal-facing. An N-linked (GlcNAc...) asparagine glycan is attached at asparagine 454. The chain crosses the membrane as a helical span at residues 545 to 565 (TFFSILFAIDFAVGLLVKALL). Over 566–1086 (RGWSDHDELS…QRKRSGTIGC (521 aa)) the chain is Cytoplasmic. WD repeat units lie at residues 593–632 (HHQL…TKLV), 637–675 (QMPR…LMLQ), 680–727 (CKPN…EGAD), 736–776 (LSSP…WSPK), and 963–1009 (GHYN…KKHR). The segment at 640–1086 (RTLKAIALDP…QRKRSGTIGC (447 aa)) is interaction with sre1.

This sequence belongs to the WD repeat SCAP family. Forms a tight complex with scp1, composed of 4 copies of scp1 and 4 copies of sre1.

Its subcellular location is the endoplasmic reticulum membrane. It is found in the golgi apparatus membrane. Its function is as follows. Escort protein required for sre1 processing at low sterol as well as oxygen levels. May regulate export of the scp1/sre1 complex from the ER at low sterol or oxygen levels. 4-methyl sterols bound to scp1 may mask an ER export signal in scp1 leading to retention of the complex in the ER. Release of 4-methyl sterols may trigger a conformational change in the SSD domain of scp1 unmasking the ER export signal leading to recruitment into COPII-coated vesicles, transport to the Golgi complex, proteolytic cleavage of sre1 in the Golgi, release of the transcription factor fragment of sre1 from the membrane, its import into the nucleus and up-regulation of genes required for ergosterol biosynthesis as well as anaerobic growth. Binds 4-methyl sterols. In Schizosaccharomyces pombe (strain 972 / ATCC 24843) (Fission yeast), this protein is Sterol regulatory element-binding protein cleavage-activating protein.